The chain runs to 498 residues: Tryptophan decarboxylase TDC2 (498 aa).

An N6-(pyridoxal phosphate)lysine modification is found at Lys-316.

It belongs to the group II decarboxylase family. Pyridoxal 5'-phosphate serves as cofactor.

It catalyses the reaction L-tryptophan + H(+) = tryptamine + CO2. Involved in the biosynthesis of tryptamine. Supplies tryptamine for the indole moiety of camptothecin (CPT), an anti-cancer monoterpene alkaloid. Represents a key step in monoterpene indole alkaloid biosynthesis. Is specific for tryptophan, and inactive against tyrosine, phenylalanine and 3,4-dihydroxyphenylalanine (dopa). The chain is Tryptophan decarboxylase TDC2 from Camptotheca acuminata (Happy tree).